The chain runs to 343 residues: Aspartate carbamoyltransferase catalytic subunit (343 aa).

2 residues coordinate carbamoyl phosphate: Arg71 and Thr72. An L-aspartate-binding site is contributed by Lys99. Residues Arg121, His149, and Gln152 each coordinate carbamoyl phosphate. L-aspartate is bound by residues Arg195 and Arg249. Carbamoyl phosphate-binding residues include Gly290 and Pro291.

This sequence belongs to the aspartate/ornithine carbamoyltransferase superfamily. ATCase family. As to quaternary structure, heterododecamer (2C3:3R2) of six catalytic PyrB chains organized as two trimers (C3), and six regulatory PyrI chains organized as three dimers (R2).

The enzyme catalyses carbamoyl phosphate + L-aspartate = N-carbamoyl-L-aspartate + phosphate + H(+). Its pathway is pyrimidine metabolism; UMP biosynthesis via de novo pathway; (S)-dihydroorotate from bicarbonate: step 2/3. Catalyzes the condensation of carbamoyl phosphate and aspartate to form carbamoyl aspartate and inorganic phosphate, the committed step in the de novo pyrimidine nucleotide biosynthesis pathway. The chain is Aspartate carbamoyltransferase catalytic subunit from Rhodopirellula baltica (strain DSM 10527 / NCIMB 13988 / SH1).